A 167-amino-acid chain; its full sequence is uncharacterized protein (167 aa).

The chain crosses the membrane as a helical span at residues 4–24 (IIGLFFIIILIVINISILAYD).

It is found in the membrane. This is an uncharacterized protein from Rickettsia prowazekii (strain Madrid E).